The chain runs to 189 residues: Interferon alpha-7 (189 aa).

An N-terminal signal peptide occupies residues 1-23; that stretch reads MARSFSLLMVVLVLSYKSICSLG. Disulfide bonds link Cys24/Cys122 and Cys52/Cys162.

This sequence belongs to the alpha/beta interferon family.

The protein resides in the secreted. Its function is as follows. Produced by macrophages, IFN-alpha have antiviral activities. Interferon stimulates the production of two enzymes: a protein kinase and an oligoadenylate synthetase. The sequence is that of Interferon alpha-7 (IFNA7) from Homo sapiens (Human).